The following is a 110-amino-acid chain: Large ribosomal subunit protein uL22 (110 aa).

The protein belongs to the universal ribosomal protein uL22 family. In terms of assembly, part of the 50S ribosomal subunit.

Functionally, this protein binds specifically to 23S rRNA; its binding is stimulated by other ribosomal proteins, e.g. L4, L17, and L20. It is important during the early stages of 50S assembly. It makes multiple contacts with different domains of the 23S rRNA in the assembled 50S subunit and ribosome. The globular domain of the protein is located near the polypeptide exit tunnel on the outside of the subunit, while an extended beta-hairpin is found that lines the wall of the exit tunnel in the center of the 70S ribosome. In Syntrophobacter fumaroxidans (strain DSM 10017 / MPOB), this protein is Large ribosomal subunit protein uL22.